Consider the following 362-residue polypeptide: Glutamate 5-kinase (362 aa).

ATP is bound at residue Lys3. Residues Ser43, Asp128, and Asn140 each contribute to the substrate site. ATP-binding positions include 160–161 and 202–208; these read TD and TGGMRTK. Residues 267 to 348 form the PUA domain; the sequence is AGAILVDAGA…REIENVLGYS (82 aa).

Belongs to the glutamate 5-kinase family.

It localises to the cytoplasm. The enzyme catalyses L-glutamate + ATP = L-glutamyl 5-phosphate + ADP. It participates in amino-acid biosynthesis; L-proline biosynthesis; L-glutamate 5-semialdehyde from L-glutamate: step 1/2. Functionally, catalyzes the transfer of a phosphate group to glutamate to form L-glutamate 5-phosphate. The polypeptide is Glutamate 5-kinase (Xanthomonas oryzae pv. oryzae (strain KACC10331 / KXO85)).